The primary structure comprises 89 residues: Large ribosomal subunit protein bL27 (89 aa).

Residues 1 to 21 (MAHKKAGGSSRNGRDSQSKRL) form a disordered region.

It belongs to the bacterial ribosomal protein bL27 family.

The chain is Large ribosomal subunit protein bL27 from Rhizobium leguminosarum bv. trifolii (strain WSM2304).